The following is a 281-amino-acid chain: 2-dehydro-3-deoxyphosphooctonate aldolase (281 aa).

It belongs to the KdsA family.

The protein resides in the cytoplasm. The catalysed reaction is D-arabinose 5-phosphate + phosphoenolpyruvate + H2O = 3-deoxy-alpha-D-manno-2-octulosonate-8-phosphate + phosphate. Its pathway is carbohydrate biosynthesis; 3-deoxy-D-manno-octulosonate biosynthesis; 3-deoxy-D-manno-octulosonate from D-ribulose 5-phosphate: step 2/3. It participates in bacterial outer membrane biogenesis; lipopolysaccharide biosynthesis. This Pseudomonas fluorescens (strain ATCC BAA-477 / NRRL B-23932 / Pf-5) protein is 2-dehydro-3-deoxyphosphooctonate aldolase.